The chain runs to 655 residues: ATP-dependent zinc metalloprotease FtsH (655 aa).

Residues M1–K17 are Cytoplasmic-facing. Residues R18–L38 form a helical membrane-spanning segment. At R39 to L124 the chain is on the lumenal side. A helical transmembrane segment spans residues P125 to I145. Over N146–N655 the chain is Cytoplasmic. An ATP-binding site is contributed by G216–T223. H440 is a binding site for Zn(2+). The active site involves E441. Positions 444 and 517 each coordinate Zn(2+).

This sequence in the central section; belongs to the AAA ATPase family. In the C-terminal section; belongs to the peptidase M41 family. In terms of assembly, homohexamer. Zn(2+) serves as cofactor.

The protein localises to the cellular thylakoid membrane. Functionally, acts as a processive, ATP-dependent zinc metallopeptidase for both cytoplasmic and membrane proteins. Plays a role in the quality control of integral membrane proteins. In Acaryochloris marina (strain MBIC 11017), this protein is ATP-dependent zinc metalloprotease FtsH.